Consider the following 400-residue polypeptide: Chalcone synthase C2 (400 aa).

The active site involves cysteine 168.

It belongs to the thiolase-like superfamily. Chalcone/stilbene synthases family.

The catalysed reaction is (E)-4-coumaroyl-CoA + 3 malonyl-CoA + 3 H(+) = 2',4,4',6'-tetrahydroxychalcone + 3 CO2 + 4 CoA. Its pathway is secondary metabolite biosynthesis; flavonoid biosynthesis. Functionally, the primary product of this enzyme is 4,2',4',6'-tetrahydroxychalcone (also termed naringenin-chalcone or chalcone) which can under specific conditions spontaneously isomerize into naringenin. The chain is Chalcone synthase C2 (C2) from Zea mays (Maize).